A 1807-amino-acid polypeptide reads, in one-letter code: Atrochrysone carboxylic acid synthase Agnpks1 (1807 aa).

The tract at residues 41–173 (LFRELHNHSK…ITGAQVIRQA (133 aa)) is N-terminal acylcarrier protein transacylase domain (SAT). Positions 411-845 (QSKIAIVGMS…GGNTTILLEE (435 aa)) constitute a Ketosynthase family 3 (KS3) domain. Active-site for beta-ketoacyl synthase activity residues include C584, H720, and H763. The interval 946–1265 (FTFTGQGASY…SLAALHCAGV (320 aa)) is malonyl-CoA:ACP transacylase (MAT) domain. The product template (PT) domain stretch occupies residues 1334 to 1653 (TSTVHQIIQE…RILLSRFFSA (320 aa)). Residues 1338–1473 (HQIIQESIDG…ATLIYGDPSE (136 aa)) are N-terminal hotdog fold. Residues 1338–1648 (HQIIQESIDG…FRRYPRILLS (311 aa)) enclose the PKS/mFAS DH domain. The active-site Proton acceptor; for dehydratase activity is the H1370. The tract at residues 1500–1648 (VANRFNHQMA…FRRYPRILLS (149 aa)) is C-terminal hotdog fold. D1559 acts as the Proton donor; for dehydratase activity in catalysis. A Carrier domain is found at 1732-1806 (DTTTAKAIQI…DLRSWLEEYY (75 aa)). Position 1766 is an O-(pantetheine 4'-phosphoryl)serine (S1766).

The enzyme catalyses holo-[ACP] + 8 malonyl-CoA + 8 H(+) = atrochrysone carboxyl-[ACP] + 8 CO2 + 8 CoA + 2 H2O. The protein operates within secondary metabolite biosynthesis. Its function is as follows. Non-reducing polyketide synthase; part of the gene cluster that mediates the biosynthesis of agnestins, dihydroxy-xanthone metabolites. The pathway begins with the assembly and cyclization of atrochrysone thioester by the non-reducing polyketide synthase Agnpks1. The atrochrysone carboxyl ACP thioesterase AgnL7 then breaks the thioester bond and releases the atrochrysone carboxylic acid as the first enzyme-free intermediate. The decarboxylase AgnL1 then catalyzes the concerted decarboxylation-elimination required to convert atochrysone carboxylic acid into emodin anthrone, which is further oxidized to emodin by the anthrone oxygenase AgnL2. Emodin then undergoes reduction catalyzed by the oxidoreductase AgnL4 to yield the dihydroquinone tautomer which is the substrate for reduction by the short chain dehydrogenase AgnL6 reduction to produce hydroxyketone, followed by AgnL8 dehydration and likely spontaneous autoxidation to chrysophanol. Baeyer-Villiger oxidation by the oxidase AgnL3 leads to monodictyphenone via cleavage of the C-10/C-10a bond of chrysophanol. Alternative cleavage at the C-4a/C-10 bond of chrysophanol also leads to the formation some cephalone F. Further conversion to agnestins A and B, requires reduction to dihydro-monodictyphenone, oxidation to agnestin C probably via an epoxide, and rearrangement to either agnestin A or agnestin B directly, although agnestin A or agnestin B can also interconvert. Within the cluster, AgnR1 is the only unassigned oxidoreductase present which could be involved in this conversion. However, AgnR1 seems not to be involved in this step, and thus genes involved in the proposed oxidation/reduction may be located elsewhere on the genome. Further agnestin A derivatives are probably formed by spontaneous decarboxylations, dehydrations and methanolysis reactions. This is Atrochrysone carboxylic acid synthase Agnpks1 from Paecilomyces divaricatus (Penicillium divaricatum).